The following is a 278-amino-acid chain: Sulfur carrier protein FdhD (278 aa).

The active-site Cysteine persulfide intermediate is Cys-121. 260–265 contacts Mo-bis(molybdopterin guanine dinucleotide); the sequence is FCKPGR.

The protein belongs to the FdhD family.

Its subcellular location is the cytoplasm. Required for formate dehydrogenase (FDH) activity. Acts as a sulfur carrier protein that transfers sulfur from IscS to the molybdenum cofactor prior to its insertion into FDH. The polypeptide is Sulfur carrier protein FdhD (Salmonella schwarzengrund (strain CVM19633)).